The chain runs to 233 residues: Nickel import system ATP-binding protein NikE (233 aa).

One can recognise an ABC transporter domain in the interval 2–228 (IELKHVTFGY…DRHSYTKELV (227 aa)). An ATP-binding site is contributed by 35 to 42 (GESGCGKS).

This sequence belongs to the ABC transporter superfamily. The complex is composed of two ATP-binding proteins (NikD and NikE), two transmembrane proteins (NikB and NikC) and a solute-binding protein (NikA).

The protein resides in the cell membrane. The enzyme catalyses Ni(2+)(out) + ATP + H2O = Ni(2+)(in) + ADP + phosphate + H(+). Functionally, part of the ABC transporter complex NikABCDE (Opp2) involved in nickel import. Probably responsible for energy coupling to the transport system. The chain is Nickel import system ATP-binding protein NikE from Staphylococcus aureus (strain bovine RF122 / ET3-1).